A 103-amino-acid polypeptide reads, in one-letter code: ATP synthase F(0) complex subunit g, mitochondrial (103 aa).

Alanine 2 bears the N-acetylalanine mark. N6-acetyllysine occurs at positions 11, 24, 35, and 54.

In terms of assembly, component of the ATP synthase complex composed at least of ATP5F1A/subunit alpha, ATP5F1B/subunit beta, ATP5MC1/subunit c (homooctomer), MT-ATP6/subunit a, MT-ATP8/subunit 8, ATP5ME/subunit e, ATP5MF/subunit f, ATP5MG/subunit g, ATP5MK/subunit k, ATP5MJ/subunit j, ATP5F1C/subunit gamma, ATP5F1D/subunit delta, ATP5F1E/subunit epsilon, ATP5PF/subunit F6, ATP5PB/subunit b, ATP5PD/subunit d, ATP5PO/subunit OSCP. ATP synthase complex consists of a soluble F(1) head domain (subunits alpha(3) and beta(3)) - the catalytic core - and a membrane F(0) domain - the membrane proton channel (subunits c, a, 8, e, f, g, k and j). These two domains are linked by a central stalk (subunits gamma, delta, and epsilon) rotating inside the F1 region and a stationary peripheral stalk (subunits F6, b, d, and OSCP).

The protein localises to the mitochondrion. The protein resides in the mitochondrion inner membrane. In terms of biological role, subunit g, of the mitochondrial membrane ATP synthase complex (F(1)F(0) ATP synthase or Complex V) that produces ATP from ADP in the presence of a proton gradient across the membrane which is generated by electron transport complexes of the respiratory chain. ATP synthase complex consist of a soluble F(1) head domain - the catalytic core - and a membrane F(1) domain - the membrane proton channel. These two domains are linked by a central stalk rotating inside the F(1) region and a stationary peripheral stalk. During catalysis, ATP synthesis in the catalytic domain of F(1) is coupled via a rotary mechanism of the central stalk subunits to proton translocation. In vivo, can only synthesize ATP although its ATP hydrolase activity can be activated artificially in vitro. Part of the complex F(0) domain. The sequence is that of ATP synthase F(0) complex subunit g, mitochondrial from Bos taurus (Bovine).